A 433-amino-acid chain; its full sequence is Trigger factor (433 aa).

A PPIase FKBP-type domain is found at 161–246 (NDRVIIDFVG…LNKVENMILP (86 aa)).

Belongs to the FKBP-type PPIase family. Tig subfamily.

Its subcellular location is the cytoplasm. It catalyses the reaction [protein]-peptidylproline (omega=180) = [protein]-peptidylproline (omega=0). Its function is as follows. Involved in protein export. Acts as a chaperone by maintaining the newly synthesized protein in an open conformation. Functions as a peptidyl-prolyl cis-trans isomerase. This is Trigger factor from Haemophilus ducreyi (strain 35000HP / ATCC 700724).